Here is a 424-residue protein sequence, read N- to C-terminus: MKDNNNYNVLIVGNKGREYALAQRLQQDERVNALYFCLGNGGTQDLGENLECEHYEHIVELALKKQIHLAIISEEEFLVLGLTEMLEKAGILVFGASKEAAKLEASKSYMKAFVKECGIKSASYFETNDLKEALSYIQNASFPLVIKALNKNTSIVYQEEEAIKILEDAFKQSNEPVIIEPFLEGFELSVTALIANDDFILLPFCQNYKRLLEGDNGVNTGGMGAIAPANFFSNELEEKIKNHIFKPTLEKLQADNTPFKGVLLAEIVIIEEKGVLEPYLLDFSVRFKDIECQTILPLLESSLLDLCLATAKGELHSLELVFSKEFVMSVALVSRNYPTSSSPKQTLYIDPVDEKKGHLILGEVEQDNGVFESSGGRVIFAIGRGKSLLEARNHAYEIAQKVHFEGMFYRKDIGFKVLDLKEYS.

The ATP-grasp domain maps to 111-312 (KAFVKECGIK…LLDLCLATAK (202 aa)). 137-189 (IQNASFPLVIKALNKNTSIVYQEEEAIKILEDAFKQSNEPVIIEPFLEGFELS) contributes to the ATP binding site.

This sequence belongs to the GARS family.

It carries out the reaction 5-phospho-beta-D-ribosylamine + glycine + ATP = N(1)-(5-phospho-beta-D-ribosyl)glycinamide + ADP + phosphate + H(+). The protein operates within purine metabolism; IMP biosynthesis via de novo pathway; N(1)-(5-phospho-D-ribosyl)glycinamide from 5-phospho-alpha-D-ribose 1-diphosphate: step 2/2. This chain is Phosphoribosylamine--glycine ligase (purD), found in Helicobacter pylori (strain ATCC 700392 / 26695) (Campylobacter pylori).